The chain runs to 376 residues: MLDLIAIRRQLHQIPEIGLEEYQTQAFLLSVIEQLCQDKPFIQIKTWKTGILVFLKGYAPEKTVAWRSDMDGLPITEETGLAFASKHQGRMHACGHDIHMTMALGLLEALVEKQSKHNMLFIFQPAEENEAGGMLMYQSGALDEWMPDEVYALHVRPDLPVGTLASNRATLFAGTCEVKVSFKGKGGHAAFPHHANDALVAASYFVTQVQTIVSRNVDPIEGAVVTFGSLHAGTTNNVISQEALLHGTIRTLTHDMSQLTQKRLTEMAEGIAKSFGLEVDVHLKQGGYLPVENNPELADELISFFKESDTINMIECLPAMTGEDFGFLLSKVKGVMFWLGVDTPYPLHHAKMSPDEGAIKQALPEIKAFLEENIED.

The active site involves Asp69. The Proton acceptor role is filled by Glu128.

This sequence belongs to the peptidase M20A family. N-acetyldiaminopimelate deacetylase subfamily.

The catalysed reaction is N-acetyl-(2S,6S)-2,6-diaminopimelate + H2O = (2S,6S)-2,6-diaminopimelate + acetate. It functions in the pathway amino-acid biosynthesis; L-lysine biosynthesis via DAP pathway; LL-2,6-diaminopimelate from (S)-tetrahydrodipicolinate (acetylase route): step 3/3. In terms of biological role, catalyzes the conversion of N-acetyl-diaminopimelate to diaminopimelate and acetate. This is N-acetyldiaminopimelate deacetylase from Streptococcus uberis (strain ATCC BAA-854 / 0140J).